The chain runs to 227 residues: Cytochrome c oxidase subunit 2 (227 aa).

Residues 1-14 lie on the Mitochondrial intermembrane side of the membrane; sequence MAYPFQLGLQDATS. Residues 15 to 45 form a helical membrane-spanning segment; the sequence is PIMEELLHFHDHTLMIVFLISSLVLYIISLM. The Mitochondrial matrix segment spans residues 46-59; it reads LTTKLTHTSTMDAQ. The chain crosses the membrane as a helical span at residues 60–87; it reads EVETVWTILPAIILILIALPSLRILYMM. Residues 88-227 lie on the Mitochondrial intermembrane side of the membrane; it reads DEINNPSLTV…YFETWSALMV (140 aa). Positions 161, 196, 198, 200, 204, and 207 each coordinate Cu cation. Glutamate 198 lines the Mg(2+) pocket. Tyrosine 218 bears the Phosphotyrosine mark.

It belongs to the cytochrome c oxidase subunit 2 family. As to quaternary structure, component of the cytochrome c oxidase (complex IV, CIV), a multisubunit enzyme composed of 14 subunits. The complex is composed of a catalytic core of 3 subunits MT-CO1, MT-CO2 and MT-CO3, encoded in the mitochondrial DNA, and 11 supernumerary subunits COX4I, COX5A, COX5B, COX6A, COX6B, COX6C, COX7A, COX7B, COX7C, COX8 and NDUFA4, which are encoded in the nuclear genome. The complex exists as a monomer or a dimer and forms supercomplexes (SCs) in the inner mitochondrial membrane with NADH-ubiquinone oxidoreductase (complex I, CI) and ubiquinol-cytochrome c oxidoreductase (cytochrome b-c1 complex, complex III, CIII), resulting in different assemblies (supercomplex SCI(1)III(2)IV(1) and megacomplex MCI(2)III(2)IV(2)). Found in a complex with TMEM177, COA6, COX18, COX20, SCO1 and SCO2. Interacts with TMEM177 in a COX20-dependent manner. Interacts with COX20. Interacts with COX16. Cu cation is required as a cofactor.

Its subcellular location is the mitochondrion inner membrane. It catalyses the reaction 4 Fe(II)-[cytochrome c] + O2 + 8 H(+)(in) = 4 Fe(III)-[cytochrome c] + 2 H2O + 4 H(+)(out). Its function is as follows. Component of the cytochrome c oxidase, the last enzyme in the mitochondrial electron transport chain which drives oxidative phosphorylation. The respiratory chain contains 3 multisubunit complexes succinate dehydrogenase (complex II, CII), ubiquinol-cytochrome c oxidoreductase (cytochrome b-c1 complex, complex III, CIII) and cytochrome c oxidase (complex IV, CIV), that cooperate to transfer electrons derived from NADH and succinate to molecular oxygen, creating an electrochemical gradient over the inner membrane that drives transmembrane transport and the ATP synthase. Cytochrome c oxidase is the component of the respiratory chain that catalyzes the reduction of oxygen to water. Electrons originating from reduced cytochrome c in the intermembrane space (IMS) are transferred via the dinuclear copper A center (CU(A)) of subunit 2 and heme A of subunit 1 to the active site in subunit 1, a binuclear center (BNC) formed by heme A3 and copper B (CU(B)). The BNC reduces molecular oxygen to 2 water molecules using 4 electrons from cytochrome c in the IMS and 4 protons from the mitochondrial matrix. This chain is Cytochrome c oxidase subunit 2 (MT-CO2), found in Urocyon cinereoargenteus (Gray fox).